The sequence spans 205 residues: uncharacterized protein (205 aa).

The helical transmembrane segment at 5-27 threads the bilayer; it reads IIVLFIIHFIMINENVFIALLHY.

To T.maritima TM1570.

Its subcellular location is the membrane. This is an uncharacterized protein from Aquifex aeolicus (strain VF5).